Consider the following 344-residue polypeptide: Arginine N-succinyltransferase (344 aa).

Leu-125 lines the succinyl-CoA pocket. The active-site Proton donor is the His-229.

Belongs to the arginine N-succinyltransferase family.

The enzyme catalyses succinyl-CoA + L-arginine = N(2)-succinyl-L-arginine + CoA + H(+). Its pathway is amino-acid degradation; L-arginine degradation via AST pathway; L-glutamate and succinate from L-arginine: step 1/5. Catalyzes the transfer of succinyl-CoA to arginine to produce N(2)-succinylarginine. The protein is Arginine N-succinyltransferase of Shigella dysenteriae serotype 1 (strain Sd197).